The following is a 61-amino-acid chain: Large ribosomal subunit protein eL24 (61 aa).

The Zn(2+) site is built by cysteine 7, cysteine 10, cysteine 33, and cysteine 37. The C4-type zinc-finger motif lies at 7–37 (CSFCGGDIPPATGMMHVRNDGTILWFCSNKC).

The protein belongs to the eukaryotic ribosomal protein eL24 family. As to quaternary structure, part of the 50S ribosomal subunit. Forms a cluster with proteins L3 and L14. Zn(2+) is required as a cofactor.

Its function is as follows. Binds to the 23S rRNA. In Metallosphaera sedula (strain ATCC 51363 / DSM 5348 / JCM 9185 / NBRC 15509 / TH2), this protein is Large ribosomal subunit protein eL24.